The following is a 691-amino-acid chain: Threonine--tRNA ligase (691 aa).

The region spanning 1–66 is the TGS domain; that stretch reads MSAPARPAPA…DADVDVIPVT (66 aa). A catalytic region spans residues 265 to 571; it reads DHRKLGVELD…LTEHYAGAFP (307 aa). 3 residues coordinate Zn(2+): C370, H421, and H548.

It belongs to the class-II aminoacyl-tRNA synthetase family. In terms of assembly, homodimer. Zn(2+) is required as a cofactor.

The protein resides in the cytoplasm. The enzyme catalyses tRNA(Thr) + L-threonine + ATP = L-threonyl-tRNA(Thr) + AMP + diphosphate + H(+). Functionally, catalyzes the attachment of threonine to tRNA(Thr) in a two-step reaction: L-threonine is first activated by ATP to form Thr-AMP and then transferred to the acceptor end of tRNA(Thr). Also edits incorrectly charged L-seryl-tRNA(Thr). The sequence is that of Threonine--tRNA ligase from Mycolicibacterium vanbaalenii (strain DSM 7251 / JCM 13017 / BCRC 16820 / KCTC 9966 / NRRL B-24157 / PYR-1) (Mycobacterium vanbaalenii).